The chain runs to 238 residues: Pyridoxine 5'-phosphate synthase (238 aa).

Residue N9 participates in 3-amino-2-oxopropyl phosphate binding. 11–12 (DH) lines the 1-deoxy-D-xylulose 5-phosphate pocket. Residue R20 participates in 3-amino-2-oxopropyl phosphate binding. The active-site Proton acceptor is the H45. 1-deoxy-D-xylulose 5-phosphate contacts are provided by R47 and H52. The Proton acceptor role is filled by E72. Position 102 (T102) interacts with 1-deoxy-D-xylulose 5-phosphate. The active-site Proton donor is the H189. 3-amino-2-oxopropyl phosphate is bound by residues G190 and 211–212 (GH).

Belongs to the PNP synthase family. In terms of assembly, homooctamer; tetramer of dimers.

Its subcellular location is the cytoplasm. It carries out the reaction 3-amino-2-oxopropyl phosphate + 1-deoxy-D-xylulose 5-phosphate = pyridoxine 5'-phosphate + phosphate + 2 H2O + H(+). It functions in the pathway cofactor biosynthesis; pyridoxine 5'-phosphate biosynthesis; pyridoxine 5'-phosphate from D-erythrose 4-phosphate: step 5/5. Functionally, catalyzes the complicated ring closure reaction between the two acyclic compounds 1-deoxy-D-xylulose-5-phosphate (DXP) and 3-amino-2-oxopropyl phosphate (1-amino-acetone-3-phosphate or AAP) to form pyridoxine 5'-phosphate (PNP) and inorganic phosphate. In Ehrlichia canis (strain Jake), this protein is Pyridoxine 5'-phosphate synthase.